A 105-amino-acid chain; its full sequence is Small ribosomal subunit protein uS10c (105 aa).

The protein belongs to the universal ribosomal protein uS10 family. In terms of assembly, part of the 30S ribosomal subunit.

It localises to the plastid. Its subcellular location is the chloroplast. In terms of biological role, involved in the binding of tRNA to the ribosomes. The sequence is that of Small ribosomal subunit protein uS10c from Gracilaria tenuistipitata var. liui (Red alga).